The sequence spans 253 residues: uncharacterized protein (253 aa).

10–34 (LVTGASSGLGRGLALWLARRGVRVF) provides a ligand contact to NADP(+). A substrate-binding site is contributed by S142. Y155 acts as the Proton acceptor in catalysis.

Belongs to the short-chain dehydrogenases/reductases (SDR) family.

This is an uncharacterized protein from Myxococcus xanthus (strain DK1622).